We begin with the raw amino-acid sequence, 255 residues long: Pyridoxine 5'-phosphate synthase (255 aa).

N12 is a binding site for 3-amino-2-oxopropyl phosphate. 14-15 (DH) is a binding site for 1-deoxy-D-xylulose 5-phosphate. R23 is a binding site for 3-amino-2-oxopropyl phosphate. H48 serves as the catalytic Proton acceptor. Residues R50 and H55 each coordinate 1-deoxy-D-xylulose 5-phosphate. E75 serves as the catalytic Proton acceptor. T105 serves as a coordination point for 1-deoxy-D-xylulose 5-phosphate. H199 functions as the Proton donor in the catalytic mechanism. 3-amino-2-oxopropyl phosphate-binding positions include G200 and 221–222 (GF).

This sequence belongs to the PNP synthase family. As to quaternary structure, homooctamer; tetramer of dimers.

It is found in the cytoplasm. It carries out the reaction 3-amino-2-oxopropyl phosphate + 1-deoxy-D-xylulose 5-phosphate = pyridoxine 5'-phosphate + phosphate + 2 H2O + H(+). It functions in the pathway cofactor biosynthesis; pyridoxine 5'-phosphate biosynthesis; pyridoxine 5'-phosphate from D-erythrose 4-phosphate: step 5/5. Its function is as follows. Catalyzes the complicated ring closure reaction between the two acyclic compounds 1-deoxy-D-xylulose-5-phosphate (DXP) and 3-amino-2-oxopropyl phosphate (1-amino-acetone-3-phosphate or AAP) to form pyridoxine 5'-phosphate (PNP) and inorganic phosphate. In Rhodopseudomonas palustris (strain BisB18), this protein is Pyridoxine 5'-phosphate synthase.